A 401-amino-acid chain; its full sequence is Flagellin D (401 aa).

Belongs to the bacterial flagellin family.

It is found in the secreted. The protein localises to the bacterial flagellum. Functionally, flagellin is the subunit protein which polymerizes to form the filaments of bacterial flagella. The chain is Flagellin D (flaD) from Rhizobium meliloti (strain 1021) (Ensifer meliloti).